The following is a 149-amino-acid chain: MPTRFSKTRKHRGHVSAGKGRVGKHRKHPGGRGMAGGQHHHRTNLDKYHPGYFGKVGMRHFHLLRNHQWAPILNIEKLWTLVPAEAREKYVSGAATETAPVIDLLSHGYAKLLGKGRLPQVPIVVRARYVSAEAERKIKEAGGVIELVA.

Basic residues-rich tracts occupy residues 1 to 14 and 21 to 30; these read MPTR…HRGH and RVGKHRKHPG. Positions 1-43 are disordered; it reads MPTRFSKTRKHRGHVSAGKGRVGKHRKHPGGRGMAGGQHHHRT.

Belongs to the universal ribosomal protein uL15 family. Component of the large ribosomal subunit (LSU). Mature N.crassa ribosomes consist of a small (40S) and a large (60S) subunit. The 40S small subunit contains 1 molecule of ribosomal RNA (18S rRNA) and at least 32 different proteins. The large 60S subunit contains 3 rRNA molecules (26S, 5.8S and 5S rRNA) and at least 42 different proteins.

The protein localises to the cytoplasm. Its function is as follows. Component of the ribosome, a large ribonucleoprotein complex responsible for the synthesis of proteins in the cell. The small ribosomal subunit (SSU) binds messenger RNAs (mRNAs) and translates the encoded message by selecting cognate aminoacyl-transfer RNA (tRNA) molecules. The large subunit (LSU) contains the ribosomal catalytic site termed the peptidyl transferase center (PTC), which catalyzes the formation of peptide bonds, thereby polymerizing the amino acids delivered by tRNAs into a polypeptide chain. The nascent polypeptides leave the ribosome through a tunnel in the LSU and interact with protein factors that function in enzymatic processing, targeting, and the membrane insertion of nascent chains at the exit of the ribosomal tunnel. The sequence is that of Large ribosomal subunit protein uL15 (rpl-28) from Neurospora crassa (strain ATCC 24698 / 74-OR23-1A / CBS 708.71 / DSM 1257 / FGSC 987).